The chain runs to 827 residues: ADP-ribosylation factor GTPase-activating protein AGD3 (827 aa).

A BAR domain is found at 1–225; sequence MHFTKLDDSP…INQVLTYAQQ (225 aa). 2 coiled-coil regions span residues 116-139 and 223-253; these read HEVK…REKF and AQQS…RESR. Residues 246-269 are disordered; sequence RQVDRESRWGSNGSNGSPNGDGIQ. Residues 255–267 are compositionally biased toward low complexity; sequence GSNGSNGSPNGDG. In terms of domain architecture, PH spans 292-430; the sequence is QTIRQGYLSK…WIEKITGVIA (139 aa). The disordered stretch occupies residues 439-467; it reads EQRLPGSPMGSGHHRSASESSSYESSEYD. Ser-445 is subject to Phosphoserine. Residues 501–643 enclose the Arf-GAP domain; it reads EKPIDALRKV…LFVRRSRDSD (143 aa). The C4-type zinc-finger motif lies at 516 to 539; it reads CADCGAPEPDWASLNLGVLVCIEC. 3 ANK repeats span residues 728-757, 761-790, and 794-825; these read GGSS…NVNA, SGQT…DPEA, and EGKT…YNHR.

In terms of assembly, homodimer. Interacts with DRP1A. Interacts with VAB. In terms of tissue distribution, broadly expressed. Detected in developing veins of the leaf and root. Detected in roots, hypocotyls, cotyledons, leaves, siliques and shoot apical meristems.

It is found in the golgi apparatus. Its subcellular location is the trans-Golgi network. With respect to regulation, ARF GAP activity strongly enhanced by phosphatidylinositol 4-monophosphate (PIP) and moderately enhanced by phosphatidylinositol 4,5-bisphosphate (PIP2). Its function is as follows. GTPase-activating protein (GAP) for ADP ribosylation factor (ARF). Involved in the spatial control of provascular differentiation. Required for the formation of the normal pattern of continuous secondary veins. Involved in auxin signaling but not in polar auxin transport or in auxin responses. Required for PIN1 internalization in roots. The protein is ADP-ribosylation factor GTPase-activating protein AGD3 (AGD3) of Arabidopsis thaliana (Mouse-ear cress).